The chain runs to 833 residues: P protein (833 aa).

Over 1 to 172 (MRLENKDIRL…QVSKLGCCVR (172 aa)) the chain is Cytoplasmic. A helical transmembrane segment spans residues 173-193 (WIKITGLFVFVVLCSILFSLY). The Extracellular portion of the chain corresponds to 194–325 (PDQGKFWQLL…QFLGASVEAQ (132 aa)). 3 N-linked (GlcNAc...) asparagine glycosylation sites follow: Asn-210, Asn-214, and Asn-269. Residues 326–346 (VASAVAILAGVYTLIIFEIVH) form a helical membrane-spanning segment. Residues 347–348 (RT) are Cytoplasmic-facing. A helical membrane pass occupies residues 349–369 (LAAMLGALAALAALAVVGDRP). Over 370–381 (SLTHVVEWIDFE) the chain is Extracellular. A helical membrane pass occupies residues 382-402 (TLALLFGMMILVAVFSETGFF). Residues 403-417 (DYCAVKAYQLSRGRV) lie on the Cytoplasmic side of the membrane. Residues 418-438 (WAMIFMLCLMAAILSAFLDNV) traverse the membrane as a helical segment. Residues 439 to 501 (TTMLLFTPVT…ELRKMGLDFA (63 aa)) lie on the Extracellular side of the membrane. Residues 502–522 (GFTAHMFLGICLVLLVSFPLL) traverse the membrane as a helical segment. Residues 523 to 617 (RLLYWNKKLY…RKHRISDRSL (95 aa)) lie on the Cytoplasmic side of the membrane. The helical transmembrane segment at 618-638 (LVKCLTVLGFVISMFFLNSFV) threads the bilayer. Pro-639 is a topological domain (extracellular). The chain crosses the membrane as a helical span at residues 640-660 (GIHLDLGWIAILGAIWLLILA). The Cytoplasmic portion of the chain corresponds to 661–675 (DIHDFEIILHRVEWA). A helical membrane pass occupies residues 676–696 (TLLFFAALFVLMEALTHLHLV). At 697 to 718 (EYVGEQTALLIKMVPEDQRFAA) the chain is on the extracellular side. The helical transmembrane segment at 719–739 (AIVLIVWVSALASSLIDNIPF) threads the bilayer. The Cytoplasmic segment spans residues 740-759 (TATMIPVLLNLSQDPEISLP). Residues 760–780 (ALPLMYALALGACLGGNGTLI) traverse the membrane as a helical segment. Topologically, residues 781–810 (GASTNVVCAGIAEKHGYGFSFMEFFRLGFP) are extracellular. Residues 811 to 831 (VMLMSCTIGMCYLLIAHIVVG) form a helical membrane-spanning segment. The Cytoplasmic portion of the chain corresponds to 832-833 (WN).

This sequence belongs to the CitM (TC 2.A.11) transporter family. Most abundant in melanocytes. Also present in neonatal and adult eye tissue presumably as a result of expression in the retinal pigmented epithelium and choroid body, known sites of melanogenesis in the eye. Small but detectable amounts also observed in fetal, neonatal and adult brain. Moderate amounts detected in adult testis and ovary. Not detected in heart, kidney, spleen, liver or thymus.

The protein localises to the melanosome membrane. The catalysed reaction is chloride(in) = chloride(out). Contributes to a melanosome-specific anion (chloride) current that modulates melanosomal pH for optimal tyrosinase activity required for melanogenesis and the melanosome maturation. One of the components of the mammalian pigmentary system. May serve as a key control point at which color variation is determined. Major determinant of eye color. Seems to regulate the post-translational processing of tyrosinase, which catalyzes the limiting reaction in melanin synthesis. This Mus musculus (Mouse) protein is P protein (Oca2).